The primary structure comprises 84 residues: Small ribosomal subunit protein bS16 (84 aa).

This sequence belongs to the bacterial ribosomal protein bS16 family.

In Desulforapulum autotrophicum (strain ATCC 43914 / DSM 3382 / VKM B-1955 / HRM2) (Desulfobacterium autotrophicum), this protein is Small ribosomal subunit protein bS16.